Here is a 656-residue protein sequence, read N- to C-terminus: Nexilin (656 aa).

Disordered regions lie at residues 1–131 (MNDV…IEQD), 165–198 (RAAANRKDPEDLDREHRNGRVSQEEEKTRHEEEC), and 215–284 (TEAK…VFKE). The span at 11 to 26 (LLSSSKPVPKSYVPKL) shows a compositional bias: low complexity. Over residues 27-78 (GKGDVKDKFEAMQRAREERNQRRSRDEKQRRKEQYIREREWNRRKQEIKDML) the composition is skewed to basic and acidic residues. Ser-80 carries the phosphoserine modification. Composition is skewed to basic and acidic residues over residues 103 to 131 (GKFDEMEKHRQEEQRKRTEEERKRRIEQD), 169 to 198 (NRKDPEDLDREHRNGRVSQEEEKTRHEEEC), and 216 to 269 (EAKK…RNMV). 4 positions are modified to phosphoserine: Ser-221, Ser-330, Ser-337, and Ser-345. Phosphothreonine is present on Thr-350. Disordered regions lie at residues 468 to 492 (NFHEDDDVDVKPAKKSESPFTHKVN) and 529 to 564 (AALQKKREDDEEEEGSIVNGSTTEDEEQTRSGAPWF). Phosphoserine is present on residues Ser-544 and Ser-549. Thr-551 is modified (phosphothreonine). Positions 562–650 (PWFKKPLRNT…GSAASTCILT (89 aa)) constitute an Ig-like domain.

Interacts with F-actin. As to expression, expressed in brain, testis, spleen and fibroblasts (at protein level). Not detected in liver, kidney or epithelial cells (at protein level).

Its subcellular location is the cytoplasm. It localises to the cytoskeleton. The protein resides in the cell junction. It is found in the adherens junction. The protein localises to the myofibril. Its subcellular location is the sarcomere. It localises to the z line. Functionally, involved in regulating cell migration through association with the actin cytoskeleton. Has an essential role in the maintenance of Z line and sarcomere integrity. The sequence is that of Nexilin from Rattus norvegicus (Rat).